Here is a 391-residue protein sequence, read N- to C-terminus: Superoxide dismutase [Fe] 1, chloroplastic (391 aa).

The transit peptide at 1-73 (MAFATLVGVG…GESTNSRVLQ (73 aa)) directs the protein to the chloroplast. The span at 87–119 (VNDGIDDETASDAEMDEDAEANGDESSGTDEDA) shows a compositional bias: acidic residues. The interval 87–120 (VNDGIDDETASDAEMDEDAEANGDESSGTDEDAS) is disordered. 4 residues coordinate Fe cation: His148, His202, Asp301, and His305. Residues 370 to 391 (MPQQVNGDAREQTSGQEKSLGV) form a disordered region. Polar residues predominate over residues 381-391 (QTSGQEKSLGV).

It belongs to the iron/manganese superoxide dismutase family. As to quaternary structure, homodimer. Fe cation is required as a cofactor.

The protein resides in the plastid. Its subcellular location is the chloroplast. It catalyses the reaction 2 superoxide + 2 H(+) = H2O2 + O2. Its function is as follows. Destroys superoxide anion radicals which are normally produced within the cells and which are toxic to biological systems. In Oryza sativa subsp. japonica (Rice), this protein is Superoxide dismutase [Fe] 1, chloroplastic.